The chain runs to 191 residues: Lipid A acyltransferase PagP (191 aa).

An N-terminal signal peptide occupies residues methionine 1–alanine 23. Residues histidine 62, aspartate 105, and serine 106 contribute to the active site.

It belongs to the lipid A palmitoyltransferase family. As to quaternary structure, homodimer.

The protein localises to the cell outer membrane. It catalyses the reaction a lipid A + a 1,2-diacyl-sn-glycero-3-phosphocholine = a hepta-acyl lipid A + a 2-acyl-sn-glycero-3-phosphocholine. The catalysed reaction is a lipid IVA + a 1,2-diacyl-sn-glycero-3-phosphocholine = a lipid IVB + a 2-acyl-sn-glycero-3-phosphocholine. It carries out the reaction a lipid IIA + a 1,2-diacyl-sn-glycero-3-phosphocholine = a lipid IIB + a 2-acyl-sn-glycero-3-phosphocholine. Its function is as follows. Transfers a fatty acid residue from the sn-1 position of a phospholipid to the N-linked hydroxyfatty acid chain on the proximal unit of lipid A or its precursors. This chain is Lipid A acyltransferase PagP, found in Sodalis glossinidius (strain morsitans).